A 436-amino-acid polypeptide reads, in one-letter code: Histidine--tRNA ligase (436 aa).

It belongs to the class-II aminoacyl-tRNA synthetase family. Homodimer.

The protein resides in the cytoplasm. The catalysed reaction is tRNA(His) + L-histidine + ATP = L-histidyl-tRNA(His) + AMP + diphosphate + H(+). The protein is Histidine--tRNA ligase of Prochlorococcus marinus (strain MIT 9303).